The primary structure comprises 188 residues: Large ribosomal subunit protein eL18 (188 aa).

A disordered region spans residues 147–188 (EAEKHFGPAPGVPHSHTKPYVRSKGRKFERARGRRASRAYKN). Composition is skewed to basic residues over residues 161–171 (SHTKPYVRSKG) and 178–188 (RGRRASRAYKN).

This sequence belongs to the eukaryotic ribosomal protein eL18 family.

Its subcellular location is the cytoplasm. This is Large ribosomal subunit protein eL18 (rpl-18) from Caenorhabditis elegans.